A 469-amino-acid chain; its full sequence is Putative multidrug resistance protein MdtD (469 aa).

A run of 13 helical transmembrane segments spans residues 8–28, 45–65, 68–88, 102–122, 134–154, 161–181, 191–211, 215–235, 263–283, 286–306, 338–358, 392–412, and 426–446; these read LWIVAFGFFMQTLDTTIVNTA, SVIVSYVLTVAVMLPASGWLA, VGVKWVFFSAIILFTLGSLLC, VIQGIGGAMMVPVGRLTVMKI, FVTLPGQIGPLVGPALGGFLV, WIFLINLPVGVVGALATLWLM, FDISGFIMLAIGMATLTLALD, GLGLPPLAIAGLILCGILALA, LIGSMSARIGSGMLPFMTPVF, IGLGFTPFHAGLMMIPMIIGS, LSFPLVALMGWTLLLPIVLFF, MVMQLSMSLGVSTAGILLGVF, and SAFLYSYICMAIIIALPALIF.

This sequence belongs to the major facilitator superfamily. TCR/Tet family.

The protein localises to the cell inner membrane. This is Putative multidrug resistance protein MdtD from Yersinia enterocolitica serotype O:8 / biotype 1B (strain NCTC 13174 / 8081).